A 144-amino-acid chain; its full sequence is Large ribosomal subunit protein uL15 (144 aa).

A disordered region spans residues 1–56 (MELNNLKPAAGAKHAKRRVGRGIGSGLGKTAGRGHKGQKSRSGGFHKVGFEGGQMP). Positions 21–31 (RGIGSGLGKTA) are enriched in gly residues.

It belongs to the universal ribosomal protein uL15 family. As to quaternary structure, part of the 50S ribosomal subunit.

Binds to the 23S rRNA. The polypeptide is Large ribosomal subunit protein uL15 (Burkholderia cenocepacia (strain HI2424)).